Reading from the N-terminus, the 102-residue chain is Antitoxin VapB46 (102 aa).

It belongs to the phD/YefM antitoxin family.

Its function is as follows. Antitoxin component of a type II toxin-antitoxin (TA) system. Neutralizes the effect of cognate toxin VapC46. This Mycobacterium tuberculosis (strain CDC 1551 / Oshkosh) protein is Antitoxin VapB46 (vapB46).